We begin with the raw amino-acid sequence, 449 residues long: Phosphoglucosamine mutase (449 aa).

The Phosphoserine intermediate role is filled by S104. Positions 104, 243, 245, and 247 each coordinate Mg(2+). S104 is subject to Phosphoserine.

It belongs to the phosphohexose mutase family. Requires Mg(2+) as cofactor. In terms of processing, activated by phosphorylation.

It catalyses the reaction alpha-D-glucosamine 1-phosphate = D-glucosamine 6-phosphate. Its function is as follows. Catalyzes the conversion of glucosamine-6-phosphate to glucosamine-1-phosphate. The chain is Phosphoglucosamine mutase from Xanthomonas campestris pv. campestris (strain 8004).